The chain runs to 84 residues: Small ribosomal subunit protein bS18A (84 aa).

It belongs to the bacterial ribosomal protein bS18 family. In terms of assembly, part of the 30S ribosomal subunit. Forms a tight heterodimer with protein bS6.

Its function is as follows. Binds as a heterodimer with protein bS6 to the central domain of the 16S rRNA, where it helps stabilize the platform of the 30S subunit. The polypeptide is Small ribosomal subunit protein bS18A (Mycolicibacterium paratuberculosis (strain ATCC BAA-968 / K-10) (Mycobacterium paratuberculosis)).